The sequence spans 775 residues: Subtilisin-like protease SBT3.8 (775 aa).

The first 26 residues, 1-26 (MKSCRTLIFVAIILNGLSTFVAHAGA), serve as a signal peptide directing secretion. A propeptide spans 27–109 (ESKVHIVYLG…VTPDSFYQLD (83 aa)) (activation peptide). The region spanning 30–108 (VHIVYLGEKQ…HVTPDSFYQL (79 aa)) is the Inhibitor I9 domain. The Peptidase S8 domain maps to 113–622 (TWDYLGLSVA…GGLVNPEKAA (510 aa)). N129 carries N-linked (GlcNAc...) asparagine glycosylation. D143 functions as the Charge relay system in the catalytic mechanism. N174 and N202 each carry an N-linked (GlcNAc...) asparagine glycan. The active-site Charge relay system is H218. The 93-residue stretch at 384–476 (SLVYPENPGN…VDYELGTDIL (93 aa)) folds into the PA domain. Residues N395, N410, and N538 are each glycosylated (N-linked (GlcNAc...) asparagine). S553 (charge relay system) is an active-site residue. Residues N645, N721, and N756 are each glycosylated (N-linked (GlcNAc...) asparagine).

It belongs to the peptidase S8 family.

The protein resides in the secreted. The sequence is that of Subtilisin-like protease SBT3.8 from Arabidopsis thaliana (Mouse-ear cress).